Reading from the N-terminus, the 147-residue chain is Hemoglobin subunit gamma-1 (147 aa).

Residue Gly-2 is modified to N-acetylglycine. The 145-residue stretch at 3–147 (HFTEEDKATI…VASALSSRYH (145 aa)) folds into the Globin domain. At Thr-13 the chain carries Phosphothreonine. Phosphoserine occurs at positions 45, 51, and 53. Lys-60 carries the N6-acetyllysine modification. His-64 contributes to the heme b binding site. Lys-83 is modified (N6-acetyllysine). Residue His-93 participates in heme b binding. Cys-94 is modified (S-nitrosocysteine). Residue Ser-140 is modified to Phosphoserine.

This sequence belongs to the globin family. Heterotetramer of two alpha chains and two gamma chains in fetal hemoglobin (Hb F). The ratio of gamma-G to gamma-A chains in is approximately 2:1 in infant chimpanzee, and 1:2 in the adult. Red blood cells.

Gamma chains make up the fetal hemoglobin F, in combination with alpha chains. The polypeptide is Hemoglobin subunit gamma-1 (HBG1) (Pan troglodytes (Chimpanzee)).